The chain runs to 274 residues: Non-heme haloperoxidase (274 aa).

The AB hydrolase-1 domain maps to 22–254 (PIMFHHGWPL…RLKVYPGLSH (233 aa)). Residues Ser-95, Asp-225, and His-254 contribute to the active site.

Belongs to the AB hydrolase superfamily. Bacterial non-heme haloperoxidase / perhydrolase family.

The polypeptide is Non-heme haloperoxidase (thcF) (Rhodococcus erythropolis (Arthrobacter picolinophilus)).